Reading from the N-terminus, the 607-residue chain is UPF0329 protein ECU06_1610 (607 aa).

Disordered stretches follow at residues 312 to 410 (VHEV…RSKG) and 531 to 570 (TSSE…PPGV). The segment covering 313–347 (HEVKERESEEKRREEESLRNAEELLRMEEREKGEG) has biased composition (basic and acidic residues). The segment covering 353-364 (KGKKKRGKKGAG) has biased composition (basic residues). Residues 365 to 374 (KAKEESKEED) are compositionally biased toward basic and acidic residues. Residues 375–393 (RGEEEEESVEAEVPVEEMA) are compositionally biased toward acidic residues. The span at 531–543 (TSSEKTGKGSSPS) shows a compositional bias: polar residues. A compositionally biased stretch (acidic residues) spans 549-558 (DVDEIEEDGS).

It belongs to the UPF0329 family.

In Encephalitozoon cuniculi (strain GB-M1) (Microsporidian parasite), this protein is UPF0329 protein ECU06_1610.